The primary structure comprises 524 residues: Alkaline phosphatase, tissue-nonspecific isozyme (524 aa).

An N-terminal signal peptide occupies residues 1 to 17; sequence MISPFLVLAIGTCLTNS. Position 60 (Asp-60) interacts with Mg(2+). Residues Asp-60 and Ser-110 each coordinate Zn(2+). Ser-110 functions as the Phosphoserine intermediate in the catalytic mechanism. Ser-110 bears the Phosphoserine mark. The cysteines at positions 139 and 201 are disulfide-linked. N-linked (GlcNAc...) asparagine glycosylation occurs at Asn-140. Residue Thr-173 participates in Mg(2+) binding. Residue Asn-230 is glycosylated (N-linked (GlcNAc...) asparagine). Ca(2+) is bound at residue Glu-235. Asn-271 carries an N-linked (GlcNAc...) asparagine glycan. Ca(2+) is bound by residues Phe-290 and Glu-291. The N-linked (GlcNAc...) asparagine glycan is linked to Asn-303. Ca(2+) is bound at residue Asp-306. Residue Glu-332 participates in Mg(2+) binding. Positions 337, 341, 378, and 379 each coordinate Zn(2+). Residue Asn-430 is glycosylated (N-linked (GlcNAc...) asparagine). Position 454 (His-454) interacts with Zn(2+). A disulfide bridge connects residues Cys-489 and Cys-497. A lipid anchor (GPI-anchor amidated glycine) is attached at Gly-501. The propeptide at 502 to 524 is removed in mature form; it reads SGSAPSPGALLLPLAVLSLRTLF.

This sequence belongs to the alkaline phosphatase family. In terms of assembly, homodimer. The cofactor is Mg(2+). It depends on Zn(2+) as a cofactor. Ca(2+) is required as a cofactor. Post-translationally, N-glycosylated. Widely expressed. Expressed in DRG neurons and spinal cord neurons.

It is found in the cell membrane. The protein localises to the extracellular vesicle membrane. Its subcellular location is the mitochondrion membrane. It localises to the mitochondrion intermembrane space. The enzyme catalyses a phosphate monoester + H2O = an alcohol + phosphate. The catalysed reaction is diphosphate + H2O = 2 phosphate + H(+). It carries out the reaction pyridoxal 5'-phosphate + H2O = pyridoxal + phosphate. It catalyses the reaction phosphoethanolamine + H2O = ethanolamine + phosphate. The enzyme catalyses N-phosphocreatine + H2O = creatine + phosphate. The catalysed reaction is ATP + H2O = ADP + phosphate + H(+). It carries out the reaction ADP + H2O = AMP + phosphate + H(+). It catalyses the reaction AMP + H2O = adenosine + phosphate. Phosphatase activity is specifically inhibited by 5-((5-chloro-2-methoxyphenyl)sulfonamido)nicotinamide (SBI-425). Alkaline phosphatase that metabolizes various phosphate compounds and plays a key role in skeletal mineralization and adaptive thermogenesis. Has broad substrate specificity and can hydrolyze a considerable variety of compounds: however, only a few substrates, such as diphosphate (inorganic pyrophosphate; PPi), pyridoxal 5'-phosphate (PLP) and N-phosphocreatine are natural substrates. Plays an essential role in skeletal and dental mineralization via its ability to hydrolyze extracellular diphosphate, a potent mineralization inhibitor, to phosphate: it thereby promotes hydroxyapatite crystal formation and increases inorganic phosphate concentration. Acts in a non-redundant manner with PHOSPHO1 in skeletal mineralization: while PHOSPHO1 mediates the initiation of hydroxyapatite crystallization in the matrix vesicles (MVs), ALPL/TNAP catalyzes the spread of hydroxyapatite crystallization in the extracellular matrix. Also promotes dephosphorylation of osteopontin (SSP1), an inhibitor of hydroxyapatite crystallization in its phosphorylated state; it is however unclear whether ALPL/TNAP mediates SSP1 dephosphorylation via a direct or indirect manner. Catalyzes dephosphorylation of PLP to pyridoxal (PL), the transportable form of vitamin B6, in order to provide a sufficient amount of PLP in the brain, an essential cofactor for enzymes catalyzing the synthesis of diverse neurotransmitters. Additionally, also able to mediate ATP degradation in a stepwise manner to adenosine, thereby regulating the availability of ligands for purinergic receptors. Also capable of dephosphorylating microbial products, such as lipopolysaccharides (LPS) as well as other phosphorylated small-molecules, such as poly-inosine:cytosine (poly I:C). Acts as a key regulator of adaptive thermogenesis as part of the futile creatine cycle: localizes to the mitochondria of thermogenic fat cells and acts by mediating hydrolysis of N-phosphocreatine to initiate a futile cycle of creatine dephosphorylation and phosphorylation. During the futile creatine cycle, creatine and N-phosphocreatine are in a futile cycle, which dissipates the high energy charge of N-phosphocreatine as heat without performing any mechanical or chemical work. The chain is Alkaline phosphatase, tissue-nonspecific isozyme from Mus musculus (Mouse).